The following is a 72-amino-acid chain: Translation initiation factor IF-1 (72 aa).

The S1-like domain maps to 1–72 (MAKEEMLEFP…TKGRINYRFK (72 aa)).

The protein belongs to the IF-1 family. As to quaternary structure, component of the 30S ribosomal translation pre-initiation complex which assembles on the 30S ribosome in the order IF-2 and IF-3, IF-1 and N-formylmethionyl-tRNA(fMet); mRNA recruitment can occur at any time during PIC assembly.

Its subcellular location is the cytoplasm. Its function is as follows. One of the essential components for the initiation of protein synthesis. Stabilizes the binding of IF-2 and IF-3 on the 30S subunit to which N-formylmethionyl-tRNA(fMet) subsequently binds. Helps modulate mRNA selection, yielding the 30S pre-initiation complex (PIC). Upon addition of the 50S ribosomal subunit IF-1, IF-2 and IF-3 are released leaving the mature 70S translation initiation complex. The polypeptide is Translation initiation factor IF-1 (Jannaschia sp. (strain CCS1)).